Reading from the N-terminus, the 320-residue chain is Probable cysteine protease atg4 (320 aa).

Cysteine 74 serves as the catalytic Nucleophile. Residues aspartate 232 and histidine 234 contribute to the active site.

It belongs to the peptidase C54 family.

The protein localises to the cytoplasm. The protein resides in the nucleus. It localises to the preautophagosomal structure. The catalysed reaction is [protein]-C-terminal L-amino acid-glycyl-phosphatidylethanolamide + H2O = [protein]-C-terminal L-amino acid-glycine + a 1,2-diacyl-sn-glycero-3-phosphoethanolamine. Functionally, cysteine protease that plays a key role in cytoplasm to vacuole transport (Cvt) and autophagy by mediating both proteolytic activation and delipidation of atg8. Required for selective autophagic degradation of the nucleus (nucleophagy) as well as for mitophagy which contributes to regulate mitochondrial quantity and quality by eliminating the mitochondria to a basal level to fulfill cellular energy requirements and preventing excess ROS production. The protease activity is required for proteolytic activation of atg8: cleaves the C-terminal amino acid of atg8 to reveal a C-terminal glycine. Atg8 ubiquitin-like activity requires the exposure of the glycine at the C-terminus for its conjugation to phosphatidylethanolamine (PE) and its insertion to membranes, which is necessary for autophagy. The atg8-PE conjugate mediates tethering between adjacent membranes and stimulates membrane hemifusion, leading to expansion of the autophagosomal membrane during autophagy. In addition to the protease activity, also catalyzes deconjugation of PE-conjugated forms of atg8 during macroautophagy: atg8 delipidation is required to release the protein from membranes, which facilitates multiple events during macroautophagy, and especially for efficient autophagosome biogenesis, the assembly of atg9-containing tubulovesicular clusters into phagophores/autophagosomes, and for the disassembly of PAS-associated ATG components. Atg8 delipidation by atg4 also recycles atg8-PE generated on inappropriate membranes to maintain a reservoir of unlipidated atg8 that is required for autophagosome formation at the PAS. Plays a role in meiosis and sporulation. The polypeptide is Probable cysteine protease atg4 (atg4) (Schizosaccharomyces pombe (strain 972 / ATCC 24843) (Fission yeast)).